We begin with the raw amino-acid sequence, 287 residues long: 2-dehydro-3-deoxyphosphooctonate aldolase (287 aa).

This sequence belongs to the KdsA family.

The protein localises to the cytoplasm. It catalyses the reaction D-arabinose 5-phosphate + phosphoenolpyruvate + H2O = 3-deoxy-alpha-D-manno-2-octulosonate-8-phosphate + phosphate. Its pathway is carbohydrate biosynthesis; 3-deoxy-D-manno-octulosonate biosynthesis; 3-deoxy-D-manno-octulosonate from D-ribulose 5-phosphate: step 2/3. It participates in bacterial outer membrane biogenesis; lipopolysaccharide biosynthesis. The sequence is that of 2-dehydro-3-deoxyphosphooctonate aldolase from Nitrobacter hamburgensis (strain DSM 10229 / NCIMB 13809 / X14).